The sequence spans 382 residues: Osmoprotectant import ATP-binding protein OsmV (382 aa).

Residues 2–241 (IKLENLTKQF…PANEFVGSFV (240 aa)) enclose the ABC transporter domain. Residue 39–46 (GPSGCGKT) participates in ATP binding. 2 consecutive CBS domains span residues 258–320 (VTDQ…THPF) and 322–373 (ITGK…GRTR).

It belongs to the ABC transporter superfamily. The complex is composed of two ATP-binding proteins (OsmV), two transmembrane proteins (OsmW and OsmY) and a solute-binding protein (OsmX).

The protein resides in the cell inner membrane. Its function is as follows. Part of the OsmU ABC transporter complex, which is involved in the uptake of osmoprotectants such as choline-O-sulfate and glycine betaine. Probably responsible for energy coupling to the transport system. This chain is Osmoprotectant import ATP-binding protein OsmV (osmV), found in Salmonella typhimurium (strain LT2 / SGSC1412 / ATCC 700720).